We begin with the raw amino-acid sequence, 925 residues long: MDRSGFGEISSPVIREAEVTRTARKQSAQKRVLLQASQDENFGNTTPRNQVIPRTPSSFRQPFTPTSRSLLRQPDISCILGTGGKSPRLTQSSGFFGNLSMVTNLDDSNWAAAFSSQRSGLFTNTEPHSITEDVTISAVMLREDDPGEAASMSMFSDFLQSFLKHSSSTVFDLVEEYENICGSQVNILSKIVSRATPGLQKFSKTASMLWLLQQEMVTWRLLASLYRDRIQSALEEESVFAVTAVNASEKTVVEALFQRDSLVRQSQLVVDWLESIAKDEIGEFSDNIEFYAKSVYWENTLHTLKQRQLTSYVGSVRPLVTELDPDAPIRQKMPLDDLDREDEVRLLKYLFTLIRAGMTEEAQRLCKRCGQAWRAATLEGWKLYHDPNVNGGTELEPVEGNPYRRIWKISCWRMAEDELFNRYERAIYAALSGNLKQLLPVCDTWEDTVWAYFRVMVDSLVEQEIQTSVATLDETEELPREYLGANWTLEKVFEELQATDKKRVLEENQEHYHIVQKFLILGDIDGLMDEFSKWLSKSRNNLPGHLLRFMTHLILFFRTLGLQTKEEVSIEVLKTYIQLLIREKHTNLIAFYTCHLPQDLAVAQYALFLESVTEFEQRHHCLELAKEADLDVATITKTVVENIRKKDNGEFSHHDLAPALDTGTTEEDRLKIDVIDWLVFDPAQRAEALKQGNAIMRKFLASKKHEAAKEVFVKIPQDSIAEIYNQCEEQGMESPLPAEDDNAIREHLCIRAYLEAHETFNEWFKHMNSVPQKPALIPQPTFTEKVAHEHKEKKYEMDFGIWKGHLDALTADVKEKMYNVLLFVDGGWMVDVREDAKEDHERTHQMVLLRKLCLPMLCFLLHTILHSTGQYQECLQLADMVSSERHKLYLVFSKEELRKLLQKLRESSLMLLDQGLDPLGYEIQL.

M1 is subject to N-acetylmethionine. Phosphoserine is present on residues S4, S10, S11, and S37. Residues 20–66 (TRTARKQSAQKRVLLQASQDENFGNTTPRNQVIPRTPSSFRQPFTPT) form a disordered region. 2 stretches are compositionally biased toward polar residues: residues 35–49 (QASQ…TPRN) and 55–66 (TPSSFRQPFTPT). Phosphothreonine occurs at positions 46 and 55. Phosphoserine is present on residues S57 and S58. R60 bears the Asymmetric dimethylarginine; alternate mark. Position 60 is an omega-N-methylarginine; alternate (R60). T64 is subject to Phosphothreonine. The residue at position 68 (R68) is an Omega-N-methylarginine. Phosphoserine occurs at positions 69 and 86.

It belongs to the nucleoporin Nup84/Nup107 family. As to quaternary structure, part of the nuclear pore complex (NPC). Forms part of the Nup160 subcomplex in the nuclear pore which is composed of NUP160, NUP133, NUP107 and Nup96; this complex plays a role in RNA export and in tethering Nup98 and NUP153 to the nucleus. Does not interact with TPR. Interacts with ZNF106. As to expression, ubiquitously expressed in fetal and adult tissues.

Its subcellular location is the nucleus membrane. It localises to the nucleus. The protein resides in the nuclear pore complex. The protein localises to the chromosome. It is found in the centromere. Its subcellular location is the kinetochore. In terms of biological role, plays a role in the nuclear pore complex (NPC) assembly and/or maintenance. Required for the assembly of peripheral proteins into the NPC. May anchor NUP62 to the NPC. Involved in nephrogenesis. The sequence is that of Nuclear pore complex protein Nup107 (NUP107) from Homo sapiens (Human).